Reading from the N-terminus, the 530-residue chain is Bifunctional purine biosynthesis protein PurH (530 aa).

In terms of domain architecture, MGS-like spans 1–148 (MNNARPIRRA…KNHKDVTIVV (148 aa)).

This sequence belongs to the PurH family.

The enzyme catalyses (6R)-10-formyltetrahydrofolate + 5-amino-1-(5-phospho-beta-D-ribosyl)imidazole-4-carboxamide = 5-formamido-1-(5-phospho-D-ribosyl)imidazole-4-carboxamide + (6S)-5,6,7,8-tetrahydrofolate. It catalyses the reaction IMP + H2O = 5-formamido-1-(5-phospho-D-ribosyl)imidazole-4-carboxamide. It participates in purine metabolism; IMP biosynthesis via de novo pathway; 5-formamido-1-(5-phospho-D-ribosyl)imidazole-4-carboxamide from 5-amino-1-(5-phospho-D-ribosyl)imidazole-4-carboxamide (10-formyl THF route): step 1/1. The protein operates within purine metabolism; IMP biosynthesis via de novo pathway; IMP from 5-formamido-1-(5-phospho-D-ribosyl)imidazole-4-carboxamide: step 1/1. In Vibrio atlanticus (strain LGP32) (Vibrio splendidus (strain Mel32)), this protein is Bifunctional purine biosynthesis protein PurH.